A 337-amino-acid chain; its full sequence is Monoacylglycerol lipase ABHD6 (337 aa).

Residues methionine 1–methionine 8 are Extracellular-facing. A helical; Signal-anchor for type II membrane protein transmembrane segment spans residues phenylalanine 9–leucine 29. Topologically, residues tryptophan 30–asparagine 337 are cytoplasmic. Catalysis depends on serine 148, which acts as the Nucleophile. Catalysis depends on charge relay system residues aspartate 278 and histidine 306.

Belongs to the AB hydrolase superfamily.

The protein resides in the late endosome membrane. Its subcellular location is the lysosome membrane. It localises to the mitochondrion membrane. It carries out the reaction Hydrolyzes glycerol monoesters of long-chain fatty acids.. The catalysed reaction is 1-octanoylglycerol + H2O = octanoate + glycerol + H(+). It catalyses the reaction 1-decanoylglycerol + H2O = decanoate + glycerol + H(+). The enzyme catalyses 1-dodecanoylglycerol + H2O = dodecanoate + glycerol + H(+). It carries out the reaction 1-tetradecanoylglycerol + H2O = tetradecanoate + glycerol + H(+). The catalysed reaction is 2-hexadecanoylglycerol + H2O = glycerol + hexadecanoate + H(+). It catalyses the reaction 2-(9Z-octadecenoyl)-glycerol + H2O = glycerol + (9Z)-octadecenoate + H(+). The enzyme catalyses 1-(9Z-octadecenoyl)-glycerol + H2O = glycerol + (9Z)-octadecenoate + H(+). It carries out the reaction 2-(9Z,12Z-octadecadienoyl)-glycerol + H2O = (9Z,12Z)-octadecadienoate + glycerol + H(+). The catalysed reaction is 2-(5Z,8Z,11Z,14Z-eicosatetraenoyl)-glycerol + H2O = glycerol + (5Z,8Z,11Z,14Z)-eicosatetraenoate + H(+). It catalyses the reaction 1-(5Z,8Z,11Z,14Z-eicosatetraenoyl)-glycerol + H2O = glycerol + (5Z,8Z,11Z,14Z)-eicosatetraenoate + H(+). The enzyme catalyses 1-(9Z,12Z-octadecadienoyl)-glycerol + H2O = (9Z,12Z)-octadecadienoate + glycerol + H(+). It carries out the reaction 3-(9Z-octadecenoyl)-sn-glycero-1-phospho-(3'-(9Z-octadecenoyl)-1'-sn-glycerol) + H2O = 3-(9Z-octadecenoyl)-sn-glycero-1-phospho-(1'-sn-glycerol) + (9Z)-octadecenoate + H(+). The catalysed reaction is (S,S)-2-(9Z-octadecenoyl)-sn-glycero-1-phospho-(2'-(9Z-octadecenoyl)-1'-sn-glycerol) + H2O = (S,S)-2-(9Z-octadecenoyl)-sn-glycero-1-phospho-(1'-sn-glycerol) + (9Z)-octadecenoate + H(+). It catalyses the reaction (R,R)-2-(9Z-octadecenoyl)-sn-glycero-3-phospho-(2'-(9Z-octadecenoyl)-3'-sn-glycerol) + H2O = (R,R)-2-(9Z-octadecenoyl)-sn-glycero-3-phospho-(3'-sn-glycerol) + (9Z)-octadecenoate + H(+). Lipase that preferentially hydrolysis medium-chain saturated monoacylglycerols including 2-arachidonoylglycerol. Through 2-arachidonoylglycerol degradation may regulate endocannabinoid signaling pathways. Also has a lysophosphatidyl lipase activity with a preference for lysophosphatidylglycerol among other lysophospholipids. Also able to degrade bis(monoacylglycero)phosphate (BMP) and constitutes the major enzyme for BMP catabolism. BMP, also known as lysobisphosphatidic acid, is enriched in late endosomes and lysosomes and plays a key role in the formation of intraluminal vesicles and in lipid sorting. The chain is Monoacylglycerol lipase ABHD6 from Rattus norvegicus (Rat).